The sequence spans 896 residues: Translation initiation factor IF-2 (896 aa).

Residues 93 to 219 (VKRDPQEAER…RMAEENEKNW (127 aa)) are compositionally biased toward basic and acidic residues. The tract at residues 93 to 307 (VKRDPQEAER…GSALQQGFQK (215 aa)) is disordered. Positions 256–271 (GRSRSSKAARPAKKGN) are enriched in basic residues. Positions 272 to 285 (KHAESKADREEARA) are enriched in basic and acidic residues. A tr-type G domain is found at 395–564 (PRAPVVTIMG…LLQAEVLELK (170 aa)). Positions 404–411 (GHVDHGKT) are G1. 404 to 411 (GHVDHGKT) provides a ligand contact to GTP. Residues 429 to 433 (GITQH) form a G2 region. The segment at 450 to 453 (DTPG) is G3. GTP-binding positions include 450–454 (DTPGH) and 504–507 (NKID). The tract at residues 504–507 (NKID) is G4. The G5 stretch occupies residues 540-542 (SAK).

Belongs to the TRAFAC class translation factor GTPase superfamily. Classic translation factor GTPase family. IF-2 subfamily.

It is found in the cytoplasm. Functionally, one of the essential components for the initiation of protein synthesis. Protects formylmethionyl-tRNA from spontaneous hydrolysis and promotes its binding to the 30S ribosomal subunits. Also involved in the hydrolysis of GTP during the formation of the 70S ribosomal complex. This chain is Translation initiation factor IF-2, found in Klebsiella pneumoniae (strain 342).